A 363-amino-acid chain; its full sequence is U-box domain-containing protein 62 (363 aa).

A disordered region spans residues 74–117 (KPIIGNPNDSGGSDGEDDVDVEEEDEDDDLDGNEGDIGMNKDAG). Positions 87-107 (DGEDDVDVEEEDEDDDLDGNE) are enriched in acidic residues. Residues 181–253 (SLRTILSDPT…QAFCREENSQ (73 aa)) enclose the U-box domain. A disordered region spans residues 343–363 (AKAPEDPSAKATPNKMVSNWL).

It catalyses the reaction S-ubiquitinyl-[E2 ubiquitin-conjugating enzyme]-L-cysteine + [acceptor protein]-L-lysine = [E2 ubiquitin-conjugating enzyme]-L-cysteine + N(6)-ubiquitinyl-[acceptor protein]-L-lysine.. The protein operates within protein modification; protein ubiquitination. In terms of biological role, functions as an E3 ubiquitin ligase. The chain is U-box domain-containing protein 62 (PUB62) from Arabidopsis thaliana (Mouse-ear cress).